The following is a 303-amino-acid chain: Diaminopimelate epimerase (303 aa).

Residues asparagine 15, glutamine 47, and asparagine 67 each contribute to the substrate site. Residue cysteine 76 is the Proton donor of the active site. Substrate contacts are provided by residues 77–78, asparagine 163, asparagine 197, and 215–216; these read GN and ER. The active-site Proton acceptor is cysteine 224. A substrate-binding site is contributed by 225–226; the sequence is GS. Residues 278-303 form a disordered region; it reads FDPATGEWSRDTQGLQGSGNADRGAA.

Belongs to the diaminopimelate epimerase family. Homodimer.

The protein resides in the cytoplasm. The enzyme catalyses (2S,6S)-2,6-diaminopimelate = meso-2,6-diaminopimelate. Its pathway is amino-acid biosynthesis; L-lysine biosynthesis via DAP pathway; DL-2,6-diaminopimelate from LL-2,6-diaminopimelate: step 1/1. In terms of biological role, catalyzes the stereoinversion of LL-2,6-diaminopimelate (L,L-DAP) to meso-diaminopimelate (meso-DAP), a precursor of L-lysine and an essential component of the bacterial peptidoglycan. The sequence is that of Diaminopimelate epimerase from Brucella melitensis biotype 1 (strain ATCC 23456 / CCUG 17765 / NCTC 10094 / 16M).